A 667-amino-acid polypeptide reads, in one-letter code: Transmembrane 9 superfamily member 1 (667 aa).

The first 22 residues, 1 to 22 (MIYKMAHVQLLLLYFFVSTVKA), serve as a signal peptide directing secretion. Topologically, residues 23–302 (FYLPGVAPTT…DKYLHVYDPS (280 aa)) are lumenal. N-linked (GlcNAc...) asparagine glycans are attached at residues Asn61 and Asn282. A helical membrane pass occupies residues 303–323 (IQWFSLINFSLVVVLLSSVVI). Residues 324–370 (HSLLRALKSDFARYNELNLDDDFQEDSGWKLNHGDVFRSPSQSLTLS) lie on the Cytoplasmic side of the membrane. A helical membrane pass occupies residues 371–391 (ILVGSGVQLFLMVTCSIFFAA). The Lumenal portion of the chain corresponds to 392 to 405 (LGFLSPSSRGSLAT). The chain crosses the membrane as a helical span at residues 406-426 (VMFILYALFGFVGSYTSMGIY). Topologically, residues 427–442 (KFFNGPYWKANLILTP) are cytoplasmic. The chain crosses the membrane as a helical span at residues 443–463 (LLVPGAILLIIIALNFFLMFV). Over 464–474 (HSSGVIPASTL) the chain is Lumenal. A helical membrane pass occupies residues 475–495 (FFMVFLWFLFSIPLSFAGSLI). The Cytoplasmic portion of the chain corresponds to 496–527 (ARKRCHWDEHPTKTNQIARQIPFQPWYLKTIP). The chain crosses the membrane as a helical span at residues 528-548 (ATLIAGIFPFGSIAVELYFIY). The Lumenal portion of the chain corresponds to 549–560 (TSLWFNKIFYMF). The helical transmembrane segment at 561–581 (GFLFFSFLLLTLTSSLVTILI) threads the bilayer. Residues 582 to 596 (TYHSLCLENWKWQWR) are Cytoplasmic-facing. Residues 597-617 (GFIIGGAGCALYVFIHSILFT) form a helical membrane-spanning segment. Over 618–635 (KFKLGGFTTIVLYVGYSS) the chain is Lumenal. The chain crosses the membrane as a helical span at residues 636–656 (VISLLCCLVTGSIGFISSMLF). Over 657–667 (VRKIYSSIKVD) the chain is Cytoplasmic.

It belongs to the nonaspanin (TM9SF) (TC 9.A.2) family.

It is found in the endosome membrane. Its subcellular location is the vacuole membrane. Functionally, with TMN2 and TMN3, plays a critical role in the late stages of a nutrient-controlled pathway notably regulating FLO11 gene expression. Acts downstream of RAS2 and TOR. Essential for cell adhesion and filamentous growth. May play a role as effector of cellular copper homeostasis. In Saccharomyces cerevisiae (strain ATCC 204508 / S288c) (Baker's yeast), this protein is Transmembrane 9 superfamily member 1 (EMP70).